Reading from the N-terminus, the 961-residue chain is E4 ubiquitin-protein ligase UFD2 (961 aa).

The region spanning 880–954 (DVPDEFLDPL…LCFKKQKKEE (75 aa)) is the U-box domain.

Belongs to the ubiquitin conjugation factor E4 family. In terms of assembly, interacts with CDC48. Interacts with the ubiquitin-like domain of RAD23 and DSK2. Interacts with PEX29.

It is found in the cytoplasm. It localises to the nucleus. The catalysed reaction is S-ubiquitinyl-[E2 ubiquitin-conjugating enzyme]-L-cysteine + [acceptor protein]-L-lysine = [E2 ubiquitin-conjugating enzyme]-L-cysteine + N(6)-ubiquitinyl-[acceptor protein]-L-lysine.. Its pathway is protein modification; protein ubiquitination. Its function is as follows. E4 ubiquitin chain-elongation enzyme specifically involved in polyubiquitin chain assembly. Binds to CDC48 and elongates mono- and diubiquitinated ERAD substrates presented by the UFD1-NPL4-CDC48/p97 (UNC) AAA ATPase complex to a chain length of 4 to 6 ubiquitin moieties. Delivers these polyubiquitinated substrates to RAD23 and DSK2, which target them to the proteasome. Has E3 ubiquitin-protein ligase activity, accepting ubiquitin from its cognate E2 ubiquitin-conjugating enzyme UBC4. Enhances ubiquitination at 'Lys-48', but not at 'Lys-29' of the Ub moiety. Promotes ubiquitin chain elongation at 'Lys-48' on the DOA10 substrate PEX29. Also involved in the proteolytic processing of the ER-bound transcription factor SPT23. The protein is E4 ubiquitin-protein ligase UFD2 (UFD2) of Saccharomyces cerevisiae (strain ATCC 204508 / S288c) (Baker's yeast).